Consider the following 638-residue polypeptide: Chaperone protein DnaK (638 aa).

Phosphothreonine; by autocatalysis is present on T198. The interval 600–638 (KTQTEGGAQPGAEADGDTGAKGGEKVVDADFEEVKDDKK) is disordered. Acidic residues predominate over residues 628–638 (ADFEEVKDDKK).

The protein belongs to the heat shock protein 70 family.

Functionally, acts as a chaperone. In Geobacter metallireducens (strain ATCC 53774 / DSM 7210 / GS-15), this protein is Chaperone protein DnaK.